The sequence spans 362 residues: GDSL esterase/lipase At5g22810 (362 aa).

The N-terminal stretch at 1–28 (MGFSGIWLNLYVVFGSLMVFERMVVMVV) is a signal peptide. The active-site Nucleophile is Ser-44. 4 N-linked (GlcNAc...) asparagine glycosylation sites follow: Asn-159, Asn-162, Asn-264, and Asn-329. Active-site residues include Asp-337 and His-340.

Belongs to the 'GDSL' lipolytic enzyme family.

The protein localises to the secreted. The chain is GDSL esterase/lipase At5g22810 from Arabidopsis thaliana (Mouse-ear cress).